Reading from the N-terminus, the 84-residue chain is RNA-binding protein Hfq (84 aa).

A Sm domain is found at 9–68 (DPYLNTLRKERVPVSIYLVNGIKLQGQIESFDQFVILLKNTVSQMVYKHAISTVVPSRPV).

This sequence belongs to the Hfq family. As to quaternary structure, homohexamer.

Functionally, RNA chaperone that binds small regulatory RNA (sRNAs) and mRNAs to facilitate mRNA translational regulation in response to envelope stress, environmental stress and changes in metabolite concentrations. Also binds with high specificity to tRNAs. The protein is RNA-binding protein Hfq of Azotobacter vinelandii (strain DJ / ATCC BAA-1303).